We begin with the raw amino-acid sequence, 250 residues long: tRNA (guanine-N(1)-)-methyltransferase (250 aa).

S-adenosyl-L-methionine contacts are provided by residues G113 and 134-139 (IGDYVL).

Belongs to the RNA methyltransferase TrmD family. Homodimer.

The protein resides in the cytoplasm. The catalysed reaction is guanosine(37) in tRNA + S-adenosyl-L-methionine = N(1)-methylguanosine(37) in tRNA + S-adenosyl-L-homocysteine + H(+). Specifically methylates guanosine-37 in various tRNAs. In Buchnera aphidicola subsp. Baizongia pistaciae (strain Bp), this protein is tRNA (guanine-N(1)-)-methyltransferase.